We begin with the raw amino-acid sequence, 77 residues long: U8-lycotoxin-Ls1m (77 aa).

An N-terminal signal peptide occupies residues 1-20 (MKLMIFTGLFLFAIVSLIEA). Residues 21–26 (QAENEK) constitute a propeptide that is removed on maturation.

Belongs to the neurotoxin 19 (CSTX) family. 08 (U8-Lctx) subfamily. Post-translationally, contains 4 disulfide bonds. In terms of tissue distribution, expressed by the venom gland.

Its subcellular location is the secreted. The protein is U8-lycotoxin-Ls1m of Lycosa singoriensis (Wolf spider).